The chain runs to 1234 residues: MSSAPRRPASGADSLHTPEPESLSPGTPGFPEQEEEDELRTLGVERFEEILQEAGSRGGEEPGRSYGEEDFEYHRQSSHHIHHPLSTHLPPDARRRKTPQGPGRKPRRRPGASPTGETPTIEEGEEDEDEVGEAEGFRAPPQQPSPASSPSAVQFFLQEDEGTDRKAERTSPSPPTQTPHQEAAPRASKGAQTGTLVEEMVAVASGTAGGDDGGAAGRPLTKAQPGHRSYNLQERRRIGSMTGVEQALLPRVPTDESEAQTLATADLDLMKSHRFEDVPGVRRHLVRKNAKGSTQAAREGREPGPTPRARPRAPHKPHEVFVELNELQLDKNQEPQWRETARWIKFEEDVEEETERWGKPHVASLSFRSLLELRRTLAHGAVLLDLDQQTLPGVAHQVVEQMVISDQIKAEDRANVLRALLLKHSHPSDEKEFSFPRNISAGSLGSLLGHHHAQGTESDPHVTEPLIGGVPETRLEVDRERELPPPAPPAGITRSKSKHELKLLEKIPENAEATVVLVGCVEFLSRPTMAFVRLREAVELDAVLEVPVPVRFLFLLLGPSSANMDYHEIGRSISTLMSDKQFHEAAYLADERDDLLTAINAFLDCSVVLPPSEVQGEELLRSVAHFQRQMLKKREEQGRLLPPGAGLEPKSAQDKALLQMVEVAGAAEDDPLRRTGRPFGGLIRDVRRRYPHYLSDFRDALDPQCLAAVIFIYFAALSPAITFGGLLGEKTQDLIGVSELIMSTALQGVIFCLLGAQPLLVIGFSGPLLVFEEAFFSFCKSNQLEYLVGRVWIGFWLVLLALLMVALEGSFLVRFVSRFTQEIFAFLISLIFIYETFYKLIKIFQEHPLHGCSVSNDSEADSSSNNMTWAATTLAPDNSSASGQERPRGQPNTALLSLVLMAGTFFIAFFLRKFKNSRFFPGRIRRVIGDFGVPIAILIMVLVDYSIEDTYTQKLSVPSGFSVTAPDKRGWVINPLGEKTPFPVWMMVASLLPAVLVFILIFMETQITTLIISKKERMLQKGSGFHLDLLLIVAMGGICALFGLPWLAAATVRSVTHANALTVMSKAVAPGDKPKIQEVKEQRVTGLLVALLVGLSMVIGDLLRQIPLAVLFGIFLYMGVTSLNGIQFYERLHLLLMPPKHHPDVTYVKKVRTMRMHLFTALQLLCLALLWAVMSTAASLAFPFILILTVPLRMVVLTRIFTEREMKCLDANEAEPVFDECEGVDEYNEMPMPV.

The interval 1–239 (MSSAPRRPAS…YNLQERRRIG (239 aa)) is disordered. The Cytoplasmic segment spans residues 1–704 (MSSAPRRPAS…SDFRDALDPQ (704 aa)). 2 stretches are compositionally biased toward basic and acidic residues: residues 39-49 (LRTLGVERFEE) and 58-75 (GGEE…EYHR). Basic residues-rich tracts occupy residues 76 to 85 (QSSHHIHHPL) and 94 to 110 (RRRK…RRRP). Serine 113 bears the Phosphoserine mark. Over residues 120 to 133 (TIEEGEEDEDEVGE) the composition is skewed to acidic residues. Phosphoserine is present on residues serine 145, serine 171, and serine 173. Residues 207-216 (TAGGDDGGAA) show a composition bias toward gly residues. Serine 240 carries the post-translational modification Phosphoserine. Phosphothreonine is present on threonine 254. The residue at position 271 (lysine 271) is an N6-methyllysine. The tract at residues 287–315 (RKNAKGSTQAAREGREPGPTPRARPRAPH) is disordered. Position 440 is a phosphoserine (serine 440). Positions 446 to 467 (SLLGHHHAQGTESDPHVTEPLI) are disordered. A run of 4 helical transmembrane segments spans residues 705–728 (CLAA…GLLG), 734–771 (LIGV…LLVF), 791–813 (VWIG…SFLV), and 823–843 (IFAF…LIKI). Positions 705–1234 (CLAAVIFIYF…DEYNEMPMPV (530 aa)) are membrane (anion exchange). Residues 844–893 (FQEHPLHGCSVSNDSEADSSSNNMTWAATTLAPDNSSASGQERPRGQPNT) lie on the Extracellular side of the membrane. 3 N-linked (GlcNAc...) asparagine glycosylation sites follow: asparagine 856, asparagine 866, and asparagine 878. A helical membrane pass occupies residues 894 to 911 (ALLSLVLMAGTFFIAFFL). Residues 912 to 926 (RKFKNSRFFPGRIRR) lie on the Cytoplasmic side of the membrane. The next 5 helical transmembrane spans lie at 927-947 (VIGD…DYSI), 981-1003 (PFPV…LIFM), 1029-1050 (LLLI…LAAA), 1084-1129 (VTGL…IQFY), and 1156-1192 (MHLF…TVPL). Residue cysteine 1166 is the site of S-palmitoyl cysteine attachment.

The protein belongs to the anion exchanger (TC 2.A.31) family. As to expression, expressed in the parotid and submandibular glands (at protein level). Expressed in the gastric mucosa (at protein level). Expressed in the choroid plexus epithelium (at protein level). Expressed in the liver and gallbladder.

The protein resides in the apical cell membrane. It localises to the basolateral cell membrane. The enzyme catalyses hydrogencarbonate(in) + chloride(out) = hydrogencarbonate(out) + chloride(in). Its activity is regulated as follows. Inhibited by 4,4'-diisothiocyanatostilbene-2,2'-disulfonic acid (DIDS). In terms of biological role, sodium-independent anion exchanger which mediates the electroneutral exchange of chloride for bicarbonate ions across the cell membrane. Plays an important role in osteoclast differentiation and function. Regulates bone resorption and calpain-dependent actin cytoskeleton organization in osteoclasts via anion exchange-dependent control of pH. Essential for intracellular pH regulation in CD8(+) T-cells upon CD3 stimulation, modulating CD8(+) T-cell responses. The polypeptide is Anion exchange protein 2 (Slc4a2) (Rattus norvegicus (Rat)).